The sequence spans 729 residues: Sodium-dependent neutral amino acid transporter B(0)AT2 (729 aa).

At 1 to 69 (MPKNSKVVKR…ERPAWNSKLQ (69 aa)) the chain is on the cytoplasmic side. A phosphoserine mark is found at serine 25 and serine 55. 3 consecutive transmembrane segments (helical) span residues 70–90 (YILA…FPYL), 98–117 (AYLL…LFFL), and 142–162 (GIGF…NVII). The Extracellular segment spans residues 163–225 (GWTLFYFSQS…SSISESGGLN (63 aa)). Asparagine 187 carries N-linked (GlcNAc...) asparagine glycosylation. 4 consecutive transmembrane segments (helical) span residues 226-244 (WKMT…LAMI), 253-270 (IMYF…CFLI), 306-323 (VFFA…FSSY), and 335-356 (VLVS…FAVL). Residues 357-452 (GFKANIVNEK…FIAFTEAMTH (96 aa)) are Extracellular-facing. Residues asparagine 383 and asparagine 394 are each glycosylated (N-linked (GlcNAc...) asparagine). The next 5 membrane-spanning stretches (helical) occupy residues 453-472 (FPAS…NLGL), 496-514 (ILTV…MFVQ), 530-550 (TLPL…VYGI), 571-592 (YMWK…IVNM), and 620-642 (VVCF…IRRC). Residues 643–729 (NLIDDSSGNL…DMPDMPESDL (87 aa)) lie on the Cytoplasmic side of the membrane. Phosphoserine occurs at positions 687, 699, and 701.

The protein belongs to the sodium:neurotransmitter symporter (SNF) (TC 2.A.22) family. SLC6A15 subfamily. As to expression, widely distributed in the central nervous system, including the olfactory bulb, the hypothalamus, the cerebral cortex, the hippocampus, and the cerebellum. In addition, intense expression is found in the motor nuclei including the oculomotor nucleus, abducens nucleus, trigeminal motor nucleus, facial nucleus, hypoglossal nucleus and ventral horn of spinal cord. Intense hybridization signals are also observed in the nuclei containing monoaminergic neurons, such as locus coeruleus, the substantia nigra pars compacta, the ventral tegmental area, the dorsal raphe nucleus and the median raphe nucleus.

The protein resides in the membrane. The catalysed reaction is L-leucine(in) + Na(+)(in) = L-leucine(out) + Na(+)(out). It catalyses the reaction L-isoleucine(in) + Na(+)(in) = L-isoleucine(out) + Na(+)(out). It carries out the reaction L-methionine(in) + Na(+)(in) = L-methionine(out) + Na(+)(out). The enzyme catalyses L-proline(in) + Na(+)(in) = L-proline(out) + Na(+)(out). The catalysed reaction is L-alanine(in) + Na(+)(in) = L-alanine(out) + Na(+)(out). It catalyses the reaction L-asparagine(in) + Na(+)(in) = L-asparagine(out) + Na(+)(out). It carries out the reaction L-valine(in) + Na(+)(in) = L-valine(out) + Na(+)(out). The enzyme catalyses L-cysteine(in) + Na(+)(in) = L-cysteine(out) + Na(+)(out). The catalysed reaction is L-glutamine(in) + Na(+)(in) = L-glutamine(out) + Na(+)(out). It catalyses the reaction L-serine(in) + Na(+)(in) = L-serine(out) + Na(+)(out). It carries out the reaction L-threonine(in) + Na(+)(in) = L-threonine(out) + Na(+)(out). The enzyme catalyses L-pipecolate(in) + Na(+)(in) = L-pipecolate(out) + Na(+)(out). The catalysed reaction is L-phenylalanine(in) + Na(+)(in) = L-phenylalanine(out) + Na(+)(out). Functionally, functions as a sodium-dependent neutral amino acid transporter. Exhibits preference for the branched-chain amino acids, particularly leucine, valine and isoleucine and methionine. Can also transport low-affinity substrates such as alanine, phenylalanine, glutamine and pipecolic acid. Mediates the saturable, pH-sensitive and electrogenic cotransport of proline and sodium ions with a stoichiometry of 1:1. May have a role as transporter for neurotransmitter precursors into neurons. In contrast to other members of the neurotransmitter transporter family, does not appear to be chloride-dependent. In Rattus norvegicus (Rat), this protein is Sodium-dependent neutral amino acid transporter B(0)AT2 (Slc6a15).